The chain runs to 179 residues: Probable mitochondrial import inner membrane translocase subunit Tim17 1 (179 aa).

Helical transmembrane passes span 17-37 (CGGAFAMGALGGGAFQAIKGF), 61-81 (LVGGNFAVWGATFSAIDCSLV), and 113-133 (LSSALVGGALLALIEGVGIVV).

The protein belongs to the Tim17/Tim22/Tim23 family. Component of the TIM23 complex at least composed of Tim23, Tim17 (Tim17a1, Tim17a2 or Tim17b1) and a Tim50. The complex interacts with the Tim44 component of the PAM complex.

It is found in the mitochondrion inner membrane. In terms of biological role, essential component of the TIM23 complex, a complex that mediates the translocation of transit peptide-containing proteins across the mitochondrial inner membrane. This chain is Probable mitochondrial import inner membrane translocase subunit Tim17 1 (Tim17b1), found in Drosophila melanogaster (Fruit fly).